A 175-amino-acid chain; its full sequence is Ribosome maturation factor RimM (175 aa).

Residues 97–170 (NGQYYWTDVL…YLYVDWQMAW (74 aa)) enclose the PRC barrel domain.

It belongs to the RimM family. Binds ribosomal protein uS19.

It localises to the cytoplasm. An accessory protein needed during the final step in the assembly of 30S ribosomal subunit, possibly for assembly of the head region. Essential for efficient processing of 16S rRNA. May be needed both before and after RbfA during the maturation of 16S rRNA. It has affinity for free ribosomal 30S subunits but not for 70S ribosomes. This is Ribosome maturation factor RimM from Dichelobacter nodosus (strain VCS1703A).